The chain runs to 130 residues: Cytochrome c-type biogenesis protein CcmE (130 aa).

At 1-7 the chain is on the cytoplasmic side; that stretch reads MKKKHKR. A helical; Signal-anchor for type II membrane protein membrane pass occupies residues 8–28; that stretch reads LLITSGIFCFLSCAVFFILTT. Topologically, residues 29–130 are extracellular; the sequence is LKENISFFYT…DENYMPKVLK (102 aa). The heme site is built by histidine 120 and tyrosine 124.

Belongs to the CcmE/CycJ family.

Its subcellular location is the cell membrane. Its function is as follows. Heme chaperone required for the biogenesis of c-type cytochromes. Transiently binds heme delivered by CcmC and transfers the heme to apo-cytochromes in a process facilitated by CcmF and CcmH. This chain is Cytochrome c-type biogenesis protein CcmE, found in Wolbachia pipientis wMel.